A 169-amino-acid polypeptide reads, in one-letter code: Endoribonuclease YbeY (169 aa).

Residues histidine 128, histidine 132, and histidine 138 each contribute to the Zn(2+) site.

Belongs to the endoribonuclease YbeY family. Requires Zn(2+) as cofactor.

It is found in the cytoplasm. Functionally, single strand-specific metallo-endoribonuclease involved in late-stage 70S ribosome quality control and in maturation of the 3' terminus of the 16S rRNA. This chain is Endoribonuclease YbeY, found in Rhizorhabdus wittichii (strain DSM 6014 / CCUG 31198 / JCM 15750 / NBRC 105917 / EY 4224 / RW1) (Sphingomonas wittichii).